The sequence spans 103 residues: Histone H4 (103 aa).

The span at 1–14 shows a compositional bias: gly residues; that stretch reads MSGRGKGGKGLGKG. Residues 1 to 20 are disordered; sequence MSGRGKGGKGLGKGGAKRHR. Residues 17–21 mediate DNA binding; it reads KRHRK.

This sequence belongs to the histone H4 family. As to quaternary structure, the nucleosome is a histone octamer containing two molecules each of H2A, H2B, H3 and H4 assembled in one H3-H4 heterotetramer and two H2A-H2B heterodimers. The octamer wraps approximately 147 bp of DNA.

The protein localises to the nucleus. It is found in the chromosome. Functionally, core component of nucleosome. Nucleosomes wrap and compact DNA into chromatin, limiting DNA accessibility to the cellular machineries which require DNA as a template. Histones thereby play a central role in transcription regulation, DNA repair, DNA replication and chromosomal stability. DNA accessibility is regulated via a complex set of post-translational modifications of histones, also called histone code, and nucleosome remodeling. This chain is Histone H4, found in Eimeria tenella (Coccidian parasite).